Here is a 522-residue protein sequence, read N- to C-terminus: BTB/POZ domain-containing protein 3 (522 aa).

Residues 120-190 form the BTB domain; that stretch reads ADVHFVVGPP…IYCDEIDLAA (71 aa). Positions 235–300 constitute a BACK domain; it reads FEEPDLTQRC…NWAEVECQRQ (66 aa).

As to expression, strongly expressed in the primary visual cortex.

Its subcellular location is the cytoplasm. It is found in the cytosol. The protein localises to the nucleus. Its function is as follows. Acts as a key regulator of dendritic field orientation during development of sensory cortex. Also directs dendrites toward active axon terminals when ectopically expressed. In Callithrix jacchus (White-tufted-ear marmoset), this protein is BTB/POZ domain-containing protein 3 (BTBD3).